We begin with the raw amino-acid sequence, 357 residues long: Chaperone protein DnaJ (357 aa).

Positions 4-69 (DYYAILGVDR…QKRKQYDETG (66 aa)) constitute a J domain. The CR-type zinc-finger motif lies at 132–213 (GASKNVKYRR…CHGTGTVSKN (82 aa)). Residues Cys-145, Cys-148, Cys-161, Cys-164, Cys-187, Cys-190, Cys-201, and Cys-204 each coordinate Zn(2+). CXXCXGXG motif repeat units follow at residues 145 to 152 (CEHCSGTG), 161 to 168 (CPTCHGSG), 187 to 194 (CRTCHGRG), and 201 to 208 (CTVCHGTG).

This sequence belongs to the DnaJ family. Homodimer. Zn(2+) is required as a cofactor.

Its subcellular location is the cytoplasm. Functionally, participates actively in the response to hyperosmotic and heat shock by preventing the aggregation of stress-denatured proteins and by disaggregating proteins, also in an autonomous, DnaK-independent fashion. Unfolded proteins bind initially to DnaJ; upon interaction with the DnaJ-bound protein, DnaK hydrolyzes its bound ATP, resulting in the formation of a stable complex. GrpE releases ADP from DnaK; ATP binding to DnaK triggers the release of the substrate protein, thus completing the reaction cycle. Several rounds of ATP-dependent interactions between DnaJ, DnaK and GrpE are required for fully efficient folding. Also involved, together with DnaK and GrpE, in the DNA replication of plasmids through activation of initiation proteins. The polypeptide is Chaperone protein DnaJ (Picrophilus torridus (strain ATCC 700027 / DSM 9790 / JCM 10055 / NBRC 100828 / KAW 2/3)).